The chain runs to 348 residues: NADH-ubiquinone oxidoreductase chain 2 (348 aa).

The next 9 helical transmembrane spans lie at 3-23, 60-80, 96-116, 149-169, 178-197, 202-219, 246-266, 274-294, and 326-346; these read PYVL…TFAS, FLTQ…NAWM, TMFM…FWMP, IDPL…GWGG, ILAY…IQYA, LLAL…FLTL, LVLL…KWLI, DLPI…YFYL, and LALF…ILTL.

Belongs to the complex I subunit 2 family.

The protein localises to the mitochondrion inner membrane. It catalyses the reaction a ubiquinone + NADH + 5 H(+)(in) = a ubiquinol + NAD(+) + 4 H(+)(out). Its function is as follows. Core subunit of the mitochondrial membrane respiratory chain NADH dehydrogenase (Complex I) that is believed to belong to the minimal assembly required for catalysis. Complex I functions in the transfer of electrons from NADH to the respiratory chain. The immediate electron acceptor for the enzyme is believed to be ubiquinone. The polypeptide is NADH-ubiquinone oxidoreductase chain 2 (MT-ND2) (Carassius auratus (Goldfish)).